A 362-amino-acid polypeptide reads, in one-letter code: 3-dehydroquinate synthase (362 aa).

Residues 72–77, 106–110, 130–131, Lys143, Lys152, and 170–173 contribute to the NAD(+) site; these read DGEQYK, GVVGD, TT, and CLKT. Glu185, His248, and His265 together coordinate Zn(2+).

Belongs to the sugar phosphate cyclases superfamily. Dehydroquinate synthase family. Co(2+) is required as a cofactor. Requires Zn(2+) as cofactor. The cofactor is NAD(+).

It is found in the cytoplasm. The enzyme catalyses 7-phospho-2-dehydro-3-deoxy-D-arabino-heptonate = 3-dehydroquinate + phosphate. Its pathway is metabolic intermediate biosynthesis; chorismate biosynthesis; chorismate from D-erythrose 4-phosphate and phosphoenolpyruvate: step 2/7. Catalyzes the conversion of 3-deoxy-D-arabino-heptulosonate 7-phosphate (DAHP) to dehydroquinate (DHQ). The chain is 3-dehydroquinate synthase from Aliivibrio salmonicida (strain LFI1238) (Vibrio salmonicida (strain LFI1238)).